The sequence spans 119 residues: V-type proton ATPase subunit F (119 aa).

This sequence belongs to the V-ATPase F subunit family. V-ATPase is a heteromultimeric enzyme made up of two complexes: the ATP-hydrolytic V1 complex and the proton translocation V0 complex. The V1 complex consists of three catalytic AB heterodimers that form a heterohexamer, three peripheral stalks each consisting of EG heterodimers, one central rotor including subunits D and F, and the regulatory subunits C and H. The proton translocation complex V0 consists of the proton transport subunit a, a ring of proteolipid subunits c9c'', rotary subunit d, subunits e and f, and the accessory subunits ATP6AP1/Ac45 and ATP6AP2/PRR.

Its subcellular location is the cytoplasmic vesicle. It localises to the secretory vesicle. The protein resides in the synaptic vesicle membrane. It is found in the clathrin-coated vesicle membrane. Its function is as follows. Subunit of the V1 complex of vacuolar(H+)-ATPase (V-ATPase), a multisubunit enzyme composed of a peripheral complex (V1) that hydrolyzes ATP and a membrane integral complex (V0) that translocates protons. V-ATPase is responsible for acidifying and maintaining the pH of intracellular compartments and in some cell types, is targeted to the plasma membrane, where it is responsible for acidifying the extracellular environment. This chain is V-type proton ATPase subunit F (Atp6v1f), found in Mus musculus (Mouse).